The following is a 719-amino-acid chain: Disintegrin and metalloproteinase domain-containing protein 18 (719 aa).

An N-terminal signal peptide occupies residues 1-19; that stretch reads MPLLFILAELAMLFARLDS. Residues 20-179 constitute a propeptide that is removed on maturation; sequence EGICLHITVP…QDKNHSQLLP (160 aa). N61, N75, N121, N152, N173, N244, and N331 each carry an N-linked (GlcNAc...) asparagine glycan. Residues 173–683 are Extracellular-facing; the sequence is NHSQLLPQSL…TKRLSKNEDS (511 aa). Positions 180–378 constitute a Peptidase M12B domain; that stretch reads QSLKLHIIVG…FDTQCLGDLS (199 aa). Disulfide bonds link C289/C373, C332/C357, and C334/C339. 2 N-linked (GlcNAc...) asparagine glycosylation sites follow: N356 and N405. Residues 387–476 form the Disintegrin domain; it reads QAVCGNGIME…HCVPDTFALN (90 aa). A disulfide bridge connects residues C447 and C468. N607, N614, and N621 each carry an N-linked (GlcNAc...) asparagine glycan. Positions 616 to 650 constitute an EGF-like domain; that stretch reads TGNDCNATKKCKGNGICNNFGNCQCFPDYRPPDCN. Intrachain disulfides connect C620/C632, C626/C638, and C640/C649. A helical membrane pass occupies residues 684–704; that stretch reads WVILGFFIFLPFIVTFLVGIM. Residues 705-719 are Cytoplasmic-facing; that stretch reads KRNERKIVPQGEHKI.

The prodomain and the metalloprotease-like domain are cleaved during the epididymal maturation of the spermatozoa. Expressed specifically in testis.

Its subcellular location is the membrane. Sperm surface membrane protein that may be involved in spermatogenesis and fertilization. This is a non catalytic metalloprotease-like protein. In Mus musculus (Mouse), this protein is Disintegrin and metalloproteinase domain-containing protein 18 (Adam18).